Here is a 111-residue protein sequence, read N- to C-terminus: Universal stress protein B (111 aa).

2 helical membrane passes run 1–21 and 90–110; these read MIST…NMAR and FILT…LMLW.

The protein belongs to the universal stress protein B family.

The protein localises to the cell inner membrane. This chain is Universal stress protein B, found in Yersinia pseudotuberculosis serotype O:1b (strain IP 31758).